Reading from the N-terminus, the 456-residue chain is tRNA-2-methylthio-N(6)-dimethylallyladenosine synthase (456 aa).

Positions 1 to 116 (MTYFFETYGC…FESIFQEIEQ (116 aa)) constitute an MTTase N-terminal domain. The [4Fe-4S] cluster site is built by C10, C46, C79, C162, C166, and C169. A Radical SAM core domain is found at 148 to 384 (SEGSFQSFIP…IALQMSTTLK (237 aa)). The region spanning 387–452 (RARVGKTLPV…GRTLRAHLVQ (66 aa)) is the TRAM domain.

Belongs to the methylthiotransferase family. MiaB subfamily. Monomer. The cofactor is [4Fe-4S] cluster.

Its subcellular location is the cytoplasm. It catalyses the reaction N(6)-dimethylallyladenosine(37) in tRNA + (sulfur carrier)-SH + AH2 + 2 S-adenosyl-L-methionine = 2-methylsulfanyl-N(6)-dimethylallyladenosine(37) in tRNA + (sulfur carrier)-H + 5'-deoxyadenosine + L-methionine + A + S-adenosyl-L-homocysteine + 2 H(+). Its function is as follows. Catalyzes the methylthiolation of N6-(dimethylallyl)adenosine (i(6)A), leading to the formation of 2-methylthio-N6-(dimethylallyl)adenosine (ms(2)i(6)A) at position 37 in tRNAs that read codons beginning with uridine. This chain is tRNA-2-methylthio-N(6)-dimethylallyladenosine synthase, found in Treponema pallidum (strain Nichols).